The following is a 232-amino-acid chain: Large ribosomal subunit protein uL1 (232 aa).

Belongs to the universal ribosomal protein uL1 family. In terms of assembly, part of the 50S ribosomal subunit.

Its function is as follows. Binds directly to 23S rRNA. The L1 stalk is quite mobile in the ribosome, and is involved in E site tRNA release. In terms of biological role, protein L1 is also a translational repressor protein, it controls the translation of the L11 operon by binding to its mRNA. In Chlamydia trachomatis serovar L2 (strain ATCC VR-902B / DSM 19102 / 434/Bu), this protein is Large ribosomal subunit protein uL1.